Here is a 452-residue protein sequence, read N- to C-terminus: F-box only protein 47 (452 aa).

Residues 41–91 enclose the F-box domain; it reads FGNFKALPLEIFQIILKYLSVKDISMLSMVSKTVSQHIINYISTSSGSKRL.

As to quaternary structure, part of a SCF (SKP1-cullin-F-box) protein ligase complex. In terms of tissue distribution, widely expressed, with highest levels in kidney, liver and pancreas. Down-regulated in tumors.

Probably recognizes and binds to some phosphorylated proteins and promotes their ubiquitination and degradation. The polypeptide is F-box only protein 47 (Homo sapiens (Human)).